Here is a 353-residue protein sequence, read N- to C-terminus: Phosphate acyltransferase (353 aa).

This sequence belongs to the PlsX family. In terms of assembly, homodimer. Probably interacts with PlsY.

Its subcellular location is the cytoplasm. The enzyme catalyses a fatty acyl-[ACP] + phosphate = an acyl phosphate + holo-[ACP]. It functions in the pathway lipid metabolism; phospholipid metabolism. Catalyzes the reversible formation of acyl-phosphate (acyl-PO(4)) from acyl-[acyl-carrier-protein] (acyl-ACP). This enzyme utilizes acyl-ACP as fatty acyl donor, but not acyl-CoA. This Rhodopseudomonas palustris (strain BisB5) protein is Phosphate acyltransferase.